Reading from the N-terminus, the 971-residue chain is DNA replication licensing factor MCM3 (971 aa).

A disordered region spans residues 52–78 (NAANYNDDQDDADERDLLGDDDGDDLE). Acidic residues predominate over residues 58–77 (DDQDDADERDLLGDDDGDDL). One can recognise an MCM domain in the interval 359–566 (IFDILSQSLA…RDRSISEHVL (208 aa)). 409-416 (GDPSTAKS) lines the ATP pocket. The short motif at 541 to 544 (SRFD) is the Arginine finger element. 3 disordered regions span residues 594 to 614 (EDADINPEEHSNSGAGVENEG), 749 to 825 (EESE…IMSP), and 842 to 893 (LRVS…FDNV). Phosphoserine occurs at positions 761, 777, and 781. Residues 761 to 772 (SPQKSPKKRQRV) show a composition bias toward basic residues. Over residues 775–801 (PASNSGSPIKSTPRRSTASSVNATPSS) the composition is skewed to polar residues. Residues 811–821 (DEQNAGEDDND) are compositionally biased toward acidic residues. The residue at position 868 (Thr-868) is a Phosphothreonine. Polar residues predominate over residues 873-889 (NVSSAGQDDEQQQSVIS).

This sequence belongs to the MCM family. Component of the MCM2-7 complex. The complex forms a toroidal hexameric ring with the proposed subunit order MCM2-MCM6-MCM4-MCM7-MCM3-MCM5; loaded onto DNA, forms a head-head double hexamer. Interacts with CSM1.

It localises to the nucleus. It carries out the reaction ATP + H2O = ADP + phosphate + H(+). Acts as a component of the MCM2-7 complex (MCM complex) which is the putative replicative helicase essential for 'once per cell cycle' DNA replication initiation and elongation in eukaryotic cells. The active ATPase sites in the MCM2-7 ring are formed through the interaction surfaces of two neighboring subunits such that a critical structure of a conserved arginine finger motif is provided in trans relative to the ATP-binding site of the Walker A box of the adjacent subunit. The six ATPase active sites, however, are likely to contribute differentially to the complex helicase activity. Once loaded onto DNA, double hexamers can slide on dsDNA in the absence of ATPase activity. Necessary for cell growth. This chain is DNA replication licensing factor MCM3 (MCM3), found in Saccharomyces cerevisiae (strain ATCC 204508 / S288c) (Baker's yeast).